Consider the following 471-residue polypeptide: Glutamate--tRNA ligase (471 aa).

A 'HIGH' region motif is present at residues 9 to 19; that stretch reads PSPTGYLHVGG. Cys-98, Cys-100, Cys-125, and His-127 together coordinate Zn(2+). The 'KMSKS' region signature appears at 237-241; that stretch reads KLSKR. Lys-240 contacts ATP.

The protein belongs to the class-I aminoacyl-tRNA synthetase family. Glutamate--tRNA ligase type 1 subfamily. As to quaternary structure, monomer. Zn(2+) serves as cofactor.

The protein resides in the cytoplasm. It carries out the reaction tRNA(Glu) + L-glutamate + ATP = L-glutamyl-tRNA(Glu) + AMP + diphosphate. Catalyzes the attachment of glutamate to tRNA(Glu) in a two-step reaction: glutamate is first activated by ATP to form Glu-AMP and then transferred to the acceptor end of tRNA(Glu). In Enterobacter sp. (strain 638), this protein is Glutamate--tRNA ligase.